We begin with the raw amino-acid sequence, 42 residues long: Phospholipase A1 (42 aa).

This sequence belongs to the AB hydrolase superfamily. Lipase family. Post-translationally, contains six disulfide bonds. Expressed by the venom gland.

The protein resides in the secreted. The catalysed reaction is a 1,2-diacyl-sn-glycero-3-phosphocholine + H2O = a 2-acyl-sn-glycero-3-phosphocholine + a fatty acid + H(+). Functionally, catalyzes the hydrolysis of phosphatidylcholine with phospholipase A1 activity. May act as an allergen and induce hemolytic activity. This chain is Phospholipase A1, found in Polistes gallicus (Paper wasp).